The chain runs to 260 residues: Alpha-acetolactate decarboxylase (260 aa).

It belongs to the alpha-acetolactate decarboxylase family.

The catalysed reaction is (2S)-2-acetolactate + H(+) = (R)-acetoin + CO2. Its pathway is polyol metabolism; (R,R)-butane-2,3-diol biosynthesis; (R,R)-butane-2,3-diol from pyruvate: step 2/3. Functionally, converts acetolactate into acetoin, which can be excreted by the cells. This may be a mechanism for controlling the internal pH of cells in the stationary stage. The polypeptide is Alpha-acetolactate decarboxylase (budA) (Klebsiella aerogenes (Enterobacter aerogenes)).